A 613-amino-acid chain; its full sequence is Kelch-like protein 21 (613 aa).

In terms of domain architecture, BTB spans 38–105 (FDVTLCAEGK…CYTGRVTVTH (68 aa)). The 103-residue stretch at 140–242 (CLEIQDFAEA…RRFYLLAHVE (103 aa)) folds into the BACK domain. 6 Kelch repeats span residues 289 to 337 (ILVV…ALGN), 338 to 384 (DIYV…VLKG), 386 to 424 (LYVV…ACRG), 426 to 472 (LYAI…TLNG), 474 to 514 (IYFV…ALGG), and 515 to 562 (RLYV…SIFR).

As to quaternary structure, component of the BCR(KLHL21) E3 ubiquitin ligase complex, at least composed of cul3, klhl21 and rbx1.

The protein resides in the cytoplasm. It localises to the cytoskeleton. The protein localises to the spindle. It participates in protein modification; protein ubiquitination. In terms of biological role, substrate-specific adapter of BCR (BTB-CUL3-RBX1) E3 ubiquitin-protein ligase complex required for efficient chromosome alignment and cytokinesis. The BCR(KLHL21) E3 ubiquitin ligase complex regulates localization of the chromosomal passenger complex (CPC) from chromosomes to the spindle midzone in anaphase and mediates the ubiquitination of AURKB. The sequence is that of Kelch-like protein 21 (klhl21) from Danio rerio (Zebrafish).